We begin with the raw amino-acid sequence, 1148 residues long: Ice nucleation protein (1148 aa).

Disordered regions lie at residues 110-131 (ADPA…PTAI), 222-256 (YGST…GYGS), and 367-394 (GSTQ…GSNL). Residues 114 to 128 (STSTSTSTSTLTPMP) are compositionally biased toward low complexity. The octapeptide periodicity stretch occupies residues 180-1099 (ATYGSTLSGD…LSAGEDSTLI (920 aa)). Residues 230 to 250 (EDSSLTAGYGSTQTAQEGSNL) are compositionally biased toward polar residues.

Belongs to the bacterial ice nucleation protein family.

Its subcellular location is the cell outer membrane. Functionally, ice nucleation proteins enable bacteria to nucleate crystallization in supercooled water. In Pseudomonas syringae, this protein is Ice nucleation protein (inaK).